We begin with the raw amino-acid sequence, 407 residues long: tRNA(Ile2) 2-agmatinylcytidine synthetase TiaS (407 aa).

It belongs to the TiaS family.

Its subcellular location is the cytoplasm. It catalyses the reaction cytidine(34) in tRNA(Ile2) + agmatine + ATP + H2O = 2-agmatinylcytidine(34) in tRNA(Ile2) + AMP + 2 phosphate + 2 H(+). Its function is as follows. ATP-dependent agmatine transferase that catalyzes the formation of 2-agmatinylcytidine (agm2C) at the wobble position (C34) of tRNA(Ile2), converting the codon specificity from AUG to AUA. The protein is tRNA(Ile2) 2-agmatinylcytidine synthetase TiaS of Caldivirga maquilingensis (strain ATCC 700844 / DSM 13496 / JCM 10307 / IC-167).